A 144-amino-acid chain; its full sequence is Bacilliredoxin BCE_4227 (144 aa).

Belongs to the bacilliredoxin family.

This is Bacilliredoxin BCE_4227 from Bacillus cereus (strain ATCC 10987 / NRS 248).